The chain runs to 135 residues: Probable histone H2A.8 (135 aa).

It belongs to the histone H2A family. The nucleosome is a histone octamer containing two molecules each of H2A, H2B, H3 and H4 assembled in one H3-H4 heterotetramer and two H2A-H2B heterodimers. The octamer wraps approximately 147 bp of DNA.

Its subcellular location is the nucleus. It localises to the chromosome. Functionally, core component of nucleosome. Nucleosomes wrap and compact DNA into chromatin, limiting DNA accessibility to the cellular machineries which require DNA as a template. Histones thereby play a central role in transcription regulation, DNA repair, DNA replication and chromosomal stability. DNA accessibility is regulated via a complex set of post-translational modifications of histones, also called histone code, and nucleosome remodeling. The protein is Probable histone H2A.8 of Oryza sativa subsp. indica (Rice).